A 910-amino-acid chain; its full sequence is Protein CHROMATIN REMODELING 25 (910 aa).

Composition is skewed to acidic residues over residues 1–18 (MEEE…DDSS) and 26–39 (QDSE…ECED). Residues 1 to 39 (MEEEDEEILSSSDCDDSSDSYKDDSQDSEGENDNPECED) are disordered. The 174-residue stretch at 198 to 371 (LHGSANINGC…FAMVNFTNPG (174 aa)) folds into the Helicase ATP-binding domain. 211–218 (DDMGLGKT) contacts ATP. The DEAH box motif lies at 322–325 (DEAH). Positions 396–417 (TEEEKNLAADRSAELSSKVNQF) form a coiled coil. The 159-residue stretch at 538–696 (VLSRLLANLR…QTDNSTRQGN (159 aa)) folds into the Helicase C-terminal domain. The tract at residues 828–861 (VSPKTVESEEHNRNQPVNKRAFNKPQQRPREPLQ) is disordered.

Belongs to the SNF2/RAD54 helicase family. Interacts with RAD51. Binds to the geminivirus mungbean yellow mosaic virus (MYMV) and to the tomato leaf curl virus (ToLCV) replication-associated proteins. Expressed ubiquitously, with the highest levels of expression in flower buds. Present in flower buds (at protein level).

The protein resides in the nucleus. In terms of biological role, dissociates RAD51 from nucleoprotein filaments formed on dsDNA. Could be involved in the turnover of RAD51 protein-dsDNA filaments. Addition of RAD54 overcomes inhibition of DNA strand exchange by RAD51 bound to substrate dsDNA. Species preference in the RAD51 dissociation and DNA strand exchange assays underlines the importance of specific RAD54-RAD51 interactions. RAD51 is unable to release dsDNA upon ATP hydrolysis, leaving it stuck on the heteroduplex DNA product after DNA strand exchange. Involved in DNA repair and mitotic recombination. Functions in the homologous recombinational DNA repair (RAD52) pathway. Required for synthesis-dependent strand annealing (SDSA) during double-strand break repair. Functionally, facilitates geminiviral replication (e.g. geminivirus mungbean yellow mosaic virus (MYMV) and tomato leaf curl virus (ToLCV)). This is Protein CHROMATIN REMODELING 25 (CHR25) from Arabidopsis thaliana (Mouse-ear cress).